Here is a 369-residue protein sequence, read N- to C-terminus: UPF0284 protein AM1_5137 (369 aa).

This sequence belongs to the UPF0284 family.

This chain is UPF0284 protein AM1_5137, found in Acaryochloris marina (strain MBIC 11017).